Consider the following 126-residue polypeptide: Small ribosomal subunit protein uS13 (126 aa).

Positions 101 to 126 (QKTKNNCRTRKGKKKTVANKKKKINK) are disordered.

It belongs to the universal ribosomal protein uS13 family. As to quaternary structure, part of the 30S ribosomal subunit. Forms a loose heterodimer with protein S19. Forms two bridges to the 50S subunit in the 70S ribosome.

Its function is as follows. Located at the top of the head of the 30S subunit, it contacts several helices of the 16S rRNA. In the 70S ribosome it contacts the 23S rRNA (bridge B1a) and protein L5 of the 50S subunit (bridge B1b), connecting the 2 subunits; these bridges are implicated in subunit movement. Contacts the tRNAs in the A and P-sites. The chain is Small ribosomal subunit protein uS13 from Karelsulcia muelleri (strain GWSS) (Sulcia muelleri).